Here is a 37-residue protein sequence, read N- to C-terminus: Glucagon-1 (37 aa).

Belongs to the glucagon family.

It localises to the secreted. Functionally, glucagon plays a key role in glucose metabolism and homeostasis. Regulates blood glucose by increasing gluconeogenesis and decreasing glycolysis. In Huso dauricus (Kaluga sturgeon), this protein is Glucagon-1.